The sequence spans 513 residues: Maturase K (513 aa).

This sequence belongs to the intron maturase 2 family. MatK subfamily.

It localises to the plastid. It is found in the chloroplast. Functionally, usually encoded in the trnK tRNA gene intron. Probably assists in splicing its own and other chloroplast group II introns. The sequence is that of Maturase K from Typha latifolia (Bulrush).